The sequence spans 451 residues: MRTRITLALAVLLLLLAGCSPGAPADGPVTLRFQSLAWQPDSVAATKELVGEWNATHPDVKVEYIQGSWDSVHDQLLTSFEGGEAPDVIHDASDDLADFAYGGYLADLSGLLPARLASDIPRGSWETATFGRGVYGVPFLQEPRVLIADADRLRAAKVRIPTPGHPWSWPEFRQVAKKLTGPGRYGVAWPLKEPVSATLNLSLSAGGRLFHRGADDKVTVRFEAGDEVVARTIHDQVAVDREHAPASTLGSGGADTLPGLFGGRYAMVPLGFSYRQQIVRQAPEDFHWQVLPAPAGAGGLTQGVSPQTLSVSADCPHKKEAVAFIDFLLRPRNMVRLALGDWMLPTGTQALKDPALHTARHGWATGTALAARLRPAPAQSVRGYPEWKDKVATPAYQRYYSGASTLADVRHAWSGTATWCWPATSADPPPGVPRAGKRNIRDATSRLPSTP.

Residues 1 to 18 form the signal peptide; sequence MRTRITLALAVLLLLLAG. The N-palmitoyl cysteine moiety is linked to residue Cys19. Residue Cys19 is the site of S-diacylglycerol cysteine attachment. The disordered stretch occupies residues 424–451; it reads TSADPPPGVPRAGKRNIRDATSRLPSTP.

The protein resides in the cell membrane. In terms of biological role, may participate in oleandomycin glycosylation and secretion during antibiotic production. This is an uncharacterized protein from Streptomyces antibioticus.